The primary structure comprises 573 residues: O-fucosyltransferase 20 (573 aa).

At 1 to 60 (MALSKNSNSNSFNKKKVSYISVPSQIINSLSSSSLQSLLVSPKKSSRSTNRFSFSYRNPR) the chain is on the cytoplasmic side. The chain crosses the membrane as a helical; Signal-anchor for type II membrane protein span at residues 61–81 (IWFFTLFLVSLFGMLKLGFNV). Residues 82 to 573 (DPISLPFSRY…RQQQEQQSDA (492 aa)) are Lumenal-facing. Asn138 carries N-linked (GlcNAc...) asparagine glycosylation. Residue 344 to 346 (HLR) participates in substrate binding. Residues Asn385 and Asn517 are each glycosylated (N-linked (GlcNAc...) asparagine). The segment covering 547–556 (AGKDVTKHPV) has biased composition (basic and acidic residues). The interval 547–573 (AGKDVTKHPVPECMCSDRQQQEQQSDA) is disordered. Polar residues predominate over residues 563 to 573 (DRQQQEQQSDA).

Belongs to the glycosyltransferase GT106 family. As to quaternary structure, interacts with RACK1A. Highly expressed in shoot apical meristem (SAM) and in young vegetative tissues.

It is found in the golgi apparatus membrane. Its pathway is glycan metabolism. Its function is as follows. May play a role in the biosynthesis of matrix polysaccharides and contribute to the biomechanics and development of the plant cell wall. In Arabidopsis thaliana (Mouse-ear cress), this protein is O-fucosyltransferase 20.